Reading from the N-terminus, the 985-residue chain is Serine/threonine-protein kinase N2 (985 aa).

The REM-1 1 domain occupies 33 to 109; the sequence is KLDFSDTIVQ…LQELNAHIVV (77 aa). Lysine 77 is subject to N6-acetyllysine. Residue serine 110 is modified to Phosphoserine. Residues 111-136 form a disordered region; it reads DPEDYTDCPRTPDTPNSDSRSSTSNN. Threonine 121 and threonine 124 each carry phosphothreonine. Over residues 121 to 136 the composition is skewed to low complexity; sequence TPDTPNSDSRSSTSNN. REM-1 domains are found at residues 121–204 and 207–286; these read TPDT…TNEL and DNAK…ELPK. Phosphoserine occurs at positions 303, 307, 361, and 363. The segment at 352–383 is disordered; sequence ATSVALPGWSPSENRSSFMSRTSKSKSGSSRN. A C2 domain is found at 354 to 474; that stretch reads SVALPGWSPS…LYLEPQGTLF (121 aa). Over residues 366–382 the composition is skewed to low complexity; that stretch reads RSSFMSRTSKSKSGSSR. A necessary to rescue apical junction formation region spans residues 383–464; sequence NLLKTDDLSN…FLDNQRHGMA (82 aa). Phosphoserine occurs at positions 536, 584, 621, and 632. Positions 570 to 590 are disordered; sequence DLEPEAPPAPPRASSLGEIDD. One can recognise a Protein kinase domain in the interval 658–917; it reads FRCCAVLGRG…AEDVKKHPFF (260 aa). Residues 664–672 and lysine 687 each bind ATP; that span reads LGRGHFGKV. Residue aspartate 783 is the Proton acceptor of the active site. Threonine 817 carries the post-translational modification Phosphothreonine; by PDPK1. The interval 918–978 is necessary for the catalytic activity; that stretch reads RLTDWSALLD…EEEQEMFRDF (61 aa). In terms of domain architecture, AGC-kinase C-terminal spans 918-985; the sequence is RLTDWSALLD…RDFDYVADWC (68 aa). Serine 953 carries the phosphoserine modification. At threonine 959 the chain carries Phosphothreonine. Positions 979-985 are negatively regulates the responsiveness of the catalytic activity by cardiolipin and is required for optimal activation by the GTP-bound RhoA; sequence DYVADWC.

It belongs to the protein kinase superfamily. AGC Ser/Thr protein kinase family. PKC subfamily. In terms of assembly, interacts (via the REM repeats) with RHOA (GTP-bound form preferentially) and interacts (via the REM repeats) with RAC1 (GTP-bound form preferentially); the interactions induce its autophosphorylation. Interacts with RHOC. Interacts with NCK1 (via SH3 domains) and NCK2. Interacts with CD44. Interacts (via C-terminal kinase domain) with PDPK1; the interaction stimulates PDPK1 kinase activity. Interacts with MAP3K2; the interaction activates PRK2 kinase activity in a MAP3K2-independent kinase activity. Interacts (via C-terminal domain) with AKT1; the interaction occurs with the C-terminal cleavage product of PRK2 in apoptotic cells. Interacts (via C-terminus) with PTPN13 (via PDZ 3 domain). Interacts with CDK10. In terms of processing, phosphorylated during mitosis. Autophosphorylated. Phosphorylated. Binding to Rho and Rac promotes autophosphorylation and phosphorylation on serine and threonine residues. Phosphorylated by CDK10. Post-translationally, proteolytically cleaved by caspase-3 during the induction of apoptotic cell death. Activated by limited proteolysis with trypsin. In terms of tissue distribution, expressed in liver (at protein level).

It is found in the cytoplasm. The protein localises to the nucleus. It localises to the membrane. The protein resides in the cell projection. Its subcellular location is the lamellipodium. It is found in the cytoskeleton. The protein localises to the cleavage furrow. It localises to the midbody. The protein resides in the cell junction. It catalyses the reaction L-seryl-[protein] + ATP = O-phospho-L-seryl-[protein] + ADP + H(+). It carries out the reaction L-threonyl-[protein] + ATP = O-phospho-L-threonyl-[protein] + ADP + H(+). Its activity is regulated as follows. Kinase activity is activated upon binding to GTP-bound Rho1/Rac1 GTPases. Activated by caspase-3 (CASP3) cleavage during apoptosis. Activated by lipids, particularly cardiolipin and to a lesser extent by other acidic phospholipids and unsaturated fatty acids. Two specific sites, Thr-817 (activation loop of the kinase domain) and Thr-959 (turn motif), need to be phosphorylated for its full activation. Its function is as follows. PKC-related serine/threonine-protein kinase and Rho/Rac effector protein that participates in specific signal transduction responses in the cell. Plays a role in the regulation of cell cycle progression, actin cytoskeleton assembly, cell migration, cell adhesion, tumor cell invasion and transcription activation signaling processes. Phosphorylates CTTN in hyaluronan-induced astrocytes and hence decreases CTTN ability to associate with filamentous actin. Phosphorylates HDAC5, therefore lead to impair HDAC5 import. Direct RhoA target required for the regulation of the maturation of primordial junctions into apical junction formation in bronchial epithelial cells. Required for G2/M phases of the cell cycle progression and abscission during cytokinesis in a ECT2-dependent manner. Stimulates FYN kinase activity that is required for establishment of skin cell-cell adhesion during keratinocytes differentiation. Regulates epithelial bladder cells speed and direction of movement during cell migration and tumor cell invasion. Inhibits Akt pro-survival-induced kinase activity. Mediates Rho protein-induced transcriptional activation via the c-fos serum response factor (SRF). Involved in the negative regulation of ciliogenesis. The chain is Serine/threonine-protein kinase N2 (Pkn2) from Rattus norvegicus (Rat).